The primary structure comprises 150 residues: Ribonuclease K6 (150 aa).

Residues 1–23 form the signal peptide; the sequence is MVLCFPLLLLLLVLWGPVCLLHA. Histidine 38 acts as the Proton acceptor in catalysis. Disulfide bonds link cysteine 46–cysteine 104, cysteine 60–cysteine 114, cysteine 78–cysteine 129, and cysteine 85–cysteine 92. A glycan (N-linked (GlcNAc...) asparagine) is linked at asparagine 55. Substrate contacts are provided by residues 61 to 65 and lysine 86; that span reads KHQNT. N-linked (GlcNAc...) asparagine glycosylation is present at asparagine 100. Arginine 105 lines the substrate pocket. Histidine 145 serves as the catalytic Proton donor.

This sequence belongs to the pancreatic ribonuclease family. In terms of assembly, interacts (via N-terminus) with bacterial lipopolysaccharide (LPS).

It localises to the secreted. Its subcellular location is the lysosome. It is found in the cytoplasmic granule. Its function is as follows. Ribonuclease which shows a preference for the pyrimidines uridine and cytosine. Has potent antibacterial activity against a range of Gram-positive and Gram-negative bacteria, including P.aeruginosa, A.baumanii, M.luteus, S.aureus, E.faecalis, E.faecium, S.saprophyticus and E.coli. Causes loss of bacterial membrane integrity, and also promotes agglutination of Gram-negative bacteria. Probably contributes to urinary tract sterility. Bactericidal activity is independent of RNase activity. The sequence is that of Ribonuclease K6 (RNASE6) from Chlorocebus aethiops (Green monkey).